Consider the following 221-residue polypeptide: Inositol phosphorylceramide synthase regulatory subunit KEI1 (221 aa).

Helical transmembrane passes span 11–31 (SFLG…ISIL), 54–74 (WIAY…LYLI), 79–99 (LLVF…TCFF), and 154–174 (ILIT…LASF). The tract at residues 176–221 (QELLHHPKYLVDRDDVEQNLKNKPIWKRLWAKSQKGCYKLCKNLLE) is COPI vesicle-binding.

This sequence belongs to the KEI1 family. Component of the inositol phosphorylceramide synthase complex composed of at least AUR1 and KEI1. Interacts (via C-terminal region) with COP1 and SEC21. Note=The interaction with AUR1 seems to occur with the full-length protein before cleavage by KEX2 since both full-length and short chains of KEI1 interact with AUR1. The precursor protein is cleaved into two polypeptide chains, KEI1N and KEI1C. The cleavage is performed in the Golgi apparatus by the KEX2 protease which recognizes residue Arg-135. Generation of KEX2 cleavage site may have been an accidental event in evolution without specific advantages or disadvantages in IPC synthesis.

The protein resides in the golgi apparatus membrane. Its function is as follows. Regulatory component of the inositol phosphorylceramide (ICP) synthase which catalyzes the addition of a phosphorylinositol group onto ceramide to form inositol phosphorylceramide, an essential step in sphingolipid biosynthesis. Helps the medial Golgi localization of IPC synthase in a COPI vesicle-dependent manner. The chain is Inositol phosphorylceramide synthase regulatory subunit KEI1 (KEI1) from Saccharomyces cerevisiae (strain ATCC 204508 / S288c) (Baker's yeast).